The following is a 151-amino-acid chain: Large ribosomal subunit protein bL9 (151 aa).

The protein belongs to the bacterial ribosomal protein bL9 family.

Functionally, binds to the 23S rRNA. The sequence is that of Large ribosomal subunit protein bL9 from Pelodictyon phaeoclathratiforme (strain DSM 5477 / BU-1).